We begin with the raw amino-acid sequence, 223 residues long: MKFAVLVFPGSNCDRDMFNAAIKSGVEAEYVDYRETSLSGFDGVLIPGGFSFGDYLRSGAMASVAPIISEVKRLAAEGKPVLGVCNGFQILTEIGLLPGALLHNDSHLFISRNEELEIVNNQTAFTNLYEQGEKVIYPVAHGEGHYYCTDEIYQQLKANNQIILKYVNNPNGSYDDIAGIVNEKGNVCGMMPHPERALETLLGTDSGVKLFEAMVKSWREQHV.

A Glutamine amidotransferase type-1 domain is found at 3–223 (FAVLVFPGSN…MVKSWREQHV (221 aa)). Cysteine 85 serves as the catalytic Nucleophile. Active-site residues include histidine 193 and glutamate 195.

In terms of assembly, part of the FGAM synthase complex composed of 1 PurL, 1 PurQ and 2 PurS subunits.

Its subcellular location is the cytoplasm. The catalysed reaction is N(2)-formyl-N(1)-(5-phospho-beta-D-ribosyl)glycinamide + L-glutamine + ATP + H2O = 2-formamido-N(1)-(5-O-phospho-beta-D-ribosyl)acetamidine + L-glutamate + ADP + phosphate + H(+). It catalyses the reaction L-glutamine + H2O = L-glutamate + NH4(+). It participates in purine metabolism; IMP biosynthesis via de novo pathway; 5-amino-1-(5-phospho-D-ribosyl)imidazole from N(2)-formyl-N(1)-(5-phospho-D-ribosyl)glycinamide: step 1/2. Its function is as follows. Part of the phosphoribosylformylglycinamidine synthase complex involved in the purines biosynthetic pathway. Catalyzes the ATP-dependent conversion of formylglycinamide ribonucleotide (FGAR) and glutamine to yield formylglycinamidine ribonucleotide (FGAM) and glutamate. The FGAM synthase complex is composed of three subunits. PurQ produces an ammonia molecule by converting glutamine to glutamate. PurL transfers the ammonia molecule to FGAR to form FGAM in an ATP-dependent manner. PurS interacts with PurQ and PurL and is thought to assist in the transfer of the ammonia molecule from PurQ to PurL. The protein is Phosphoribosylformylglycinamidine synthase subunit PurQ of Staphylococcus aureus (strain USA300).